The sequence spans 94 residues: Progonadoliberin-1 (94 aa).

The signal sequence occupies residues 1-22 (MAAKILALWLLLAGTVFPQGCC). Position 23 is a pyrrolidone carboxylic acid (Q23). A Glycine amide modification is found at G32.

The protein belongs to the GnRH family. As to expression, synthesized in preoptic neurons and is transported to the pituitary in the preoptic-hypophyseal axons.

Its subcellular location is the secreted. Its function is as follows. Stimulates the secretion of gonadotropins. May be responsible for the regulation of the hypothalamic-pituitary-gonadal axis. The polypeptide is Progonadoliberin-1 (gnrh1) (Haplochromis burtoni (Burton's mouthbrooder)).